A 153-amino-acid polypeptide reads, in one-letter code: MVLPGHVAAQNRRARHEYFIVSEVEAGIMLVGTEVKSLRVGKGNINEAFAGPMQGELFLFNAYIPEYQSKMPFPHETRRPRKLLLHKREMAKLMSAITKDGMTLVPLDIHFGQRGIAKIQLGLAKGKKLHDKREAIKERDWNRDKARLMRDKG.

The protein belongs to the SmpB family.

Its subcellular location is the cytoplasm. Functionally, required for rescue of stalled ribosomes mediated by trans-translation. Binds to transfer-messenger RNA (tmRNA), required for stable association of tmRNA with ribosomes. tmRNA and SmpB together mimic tRNA shape, replacing the anticodon stem-loop with SmpB. tmRNA is encoded by the ssrA gene; the 2 termini fold to resemble tRNA(Ala) and it encodes a 'tag peptide', a short internal open reading frame. During trans-translation Ala-aminoacylated tmRNA acts like a tRNA, entering the A-site of stalled ribosomes, displacing the stalled mRNA. The ribosome then switches to translate the ORF on the tmRNA; the nascent peptide is terminated with the 'tag peptide' encoded by the tmRNA and targeted for degradation. The ribosome is freed to recommence translation, which seems to be the essential function of trans-translation. The chain is SsrA-binding protein from Paramagnetospirillum magneticum (strain ATCC 700264 / AMB-1) (Magnetospirillum magneticum).